The chain runs to 354 residues: Putative F-box/kelch-repeat protein At5g03000 (354 aa).

The F-box domain occupies 37-86 (PTVFSSLPDELILNCLARVSRFYRPSLSLVNKEFQSLIASPDLEATRSRI). 2 Kelch repeats span residues 143–189 (EIYI…VIDG) and 190–236 (KIYV…FPGK).

The chain is Putative F-box/kelch-repeat protein At5g03000 from Arabidopsis thaliana (Mouse-ear cress).